We begin with the raw amino-acid sequence, 343 residues long: Aspartate carbamoyltransferase catalytic subunit (343 aa).

2 residues coordinate carbamoyl phosphate: Arg71 and Thr72. Lys99 provides a ligand contact to L-aspartate. Residues Arg121, His149, and Gln152 each coordinate carbamoyl phosphate. The L-aspartate site is built by Arg195 and Arg249. The carbamoyl phosphate site is built by Gly290 and Pro291.

This sequence belongs to the aspartate/ornithine carbamoyltransferase superfamily. ATCase family. As to quaternary structure, heterododecamer (2C3:3R2) of six catalytic PyrB chains organized as two trimers (C3), and six regulatory PyrI chains organized as three dimers (R2).

The catalysed reaction is carbamoyl phosphate + L-aspartate = N-carbamoyl-L-aspartate + phosphate + H(+). Its pathway is pyrimidine metabolism; UMP biosynthesis via de novo pathway; (S)-dihydroorotate from bicarbonate: step 2/3. Its function is as follows. Catalyzes the condensation of carbamoyl phosphate and aspartate to form carbamoyl aspartate and inorganic phosphate, the committed step in the de novo pyrimidine nucleotide biosynthesis pathway. The chain is Aspartate carbamoyltransferase catalytic subunit from Rhodopirellula baltica (strain DSM 10527 / NCIMB 13988 / SH1).